The primary structure comprises 144 residues: Small ribosomal subunit protein eS19 (144 aa).

Belongs to the eukaryotic ribosomal protein eS19 family.

The polypeptide is Small ribosomal subunit protein eS19 (RPS19) (Argopecten irradians (Bay scallop)).